The primary structure comprises 306 residues: Recombination-associated protein RdgC (306 aa).

The protein belongs to the RdgC family.

It localises to the cytoplasm. Its subcellular location is the nucleoid. Its function is as follows. May be involved in recombination. The sequence is that of Recombination-associated protein RdgC from Pseudomonas fluorescens (strain SBW25).